The chain runs to 407 residues: Type II secretion system protein L (407 aa).

Topologically, residues 1–257 (MEGSVSEFLT…WLRYWQIWRK (257 aa)) are cytoplasmic. The chain crosses the membrane as a helical span at residues 258-275 (VAIAAGLFVAVSISYSLF). Residues 276–407 (QAHQYEAQAD…VFGVFVVKPK (132 aa)) are Periplasmic-facing.

The protein belongs to the GSP L family. As to quaternary structure, type II secretion system is composed of four main components: the outer membrane complex, the inner membrane complex, the cytoplasmic secretion ATPase and the periplasm-spanning pseudopilus. Forms homodimers. Interacts with EpsM/GspM. Interacts with EpsE/GspE and EpsF/GspF.

The protein resides in the cell inner membrane. Functionally, inner membrane component of the type II secretion system required for the energy-dependent secretion of extracellular factors such as proteases and toxins from the periplasm. Plays a role in the complex assembly and recruits EpsM resulting in a stable complex in the inner membrane. Provides thus a link between the energy-providing EpsE protein in the cytoplasm and the rest of the T2SS machinery. The chain is Type II secretion system protein L (epsL) from Vibrio cholerae serotype O1 (strain ATCC 39315 / El Tor Inaba N16961).